Consider the following 251-residue polypeptide: MFQQNKHHQQQQQQQQQQGVVQSGVASATVNNPSESIVAGNIYECSLHGILSTPSSTFIQRAKGMMRCEHPVSYKEMVFKSTVQSAGPSWAEGSILPSEIHVRYEKNTVYVRYVGVPQIKDNINAMIRNVVDIKSSETFFIYLENLGYVKDYEYFVDGYQYSTYNLSLFLVNHRRVLNDGTKGELLNKHSMVELQCLSGEEGFVAAAEYLNTYAEYLYPFVELIKFDHRLLTAENSNTPTTNVNVVGGYNR.

This sequence belongs to the Mediator complex subunit 18 family. As to quaternary structure, component of the Mediator complex.

The protein localises to the nucleus. Functionally, component of the Mediator complex, a coactivator involved in the regulated transcription of nearly all RNA polymerase II-dependent genes. Mediator functions as a bridge to convey information from gene-specific regulatory proteins to the basal RNA polymerase II transcription machinery. Mediator is recruited to promoters by direct interactions with regulatory proteins and serves as a scaffold for the assembly of a functional preinitiation complex with RNA polymerase II and the general transcription factors. This is Putative mediator of RNA polymerase II transcription subunit 18 (med18) from Dictyostelium discoideum (Social amoeba).